A 350-amino-acid chain; its full sequence is Arginine N-succinyltransferase (350 aa).

Leucine 125 is a succinyl-CoA binding site. Catalysis depends on histidine 229, which acts as the Proton donor.

The protein belongs to the arginine N-succinyltransferase family.

It carries out the reaction succinyl-CoA + L-arginine = N(2)-succinyl-L-arginine + CoA + H(+). It functions in the pathway amino-acid degradation; L-arginine degradation via AST pathway; L-glutamate and succinate from L-arginine: step 1/5. Catalyzes the transfer of succinyl-CoA to arginine to produce N(2)-succinylarginine. The sequence is that of Arginine N-succinyltransferase from Yersinia pestis.